A 290-amino-acid chain; its full sequence is Nucleotide-binding protein Sde_3181 (290 aa).

8–15 (GRSGSGKT) is an ATP binding site. A GTP-binding site is contributed by 60-63 (DARN).

It belongs to the RapZ-like family.

Displays ATPase and GTPase activities. The sequence is that of Nucleotide-binding protein Sde_3181 from Saccharophagus degradans (strain 2-40 / ATCC 43961 / DSM 17024).